Consider the following 552-residue polypeptide: DNA ligase (552 aa).

An ATP-binding site is contributed by Glu-229. Lys-231 acts as the N6-AMP-lysine intermediate in catalysis. Arg-236 and Glu-283 together coordinate ATP. Mg(2+) is bound by residues Glu-283 and Glu-377. Residues Lys-382 and Lys-397 each coordinate ATP.

It belongs to the ATP-dependent DNA ligase family. In terms of assembly, interacts with host TOP2A and TOP2B. Requires Mg(2+) as cofactor.

The protein localises to the host cytoplasm. It catalyses the reaction ATP + (deoxyribonucleotide)n-3'-hydroxyl + 5'-phospho-(deoxyribonucleotide)m = (deoxyribonucleotide)n+m + AMP + diphosphate.. Its function is as follows. DNA ligase that seals nicks in double-stranded DNA during DNA replication, DNA recombination and DNA repair. Recruits cellular topoisomerase II to sites of viral replication and assembly. This chain is DNA ligase (OPG180), found in Vaccinia virus (strain Copenhagen) (VACV).